Consider the following 118-residue polypeptide: Large ribosomal subunit protein uL18 (118 aa).

Belongs to the universal ribosomal protein uL18 family. In terms of assembly, part of the 50S ribosomal subunit; part of the 5S rRNA/L5/L18/L25 subcomplex. Contacts the 5S and 23S rRNAs.

Functionally, this is one of the proteins that bind and probably mediate the attachment of the 5S RNA into the large ribosomal subunit, where it forms part of the central protuberance. The sequence is that of Large ribosomal subunit protein uL18 from Mycoplasmopsis pulmonis (strain UAB CTIP) (Mycoplasma pulmonis).